We begin with the raw amino-acid sequence, 287 residues long: Ret finger protein-like 4A (287 aa).

Residues 11 to 53 (CPVCLKDLEEAVQLKCGYACCLQCLNSLQKEPDGEGLLCRFCS) form an RING-type; degenerate zinc finger. In terms of domain architecture, B30.2/SPRY spans 78–276 (EPKLKSVLTM…LSICSVINPS (199 aa)).

In terms of assembly, interacts with PSMB1, UBE2A and CCNB1.

The protein localises to the cytoplasm. Its subcellular location is the nucleus. The polypeptide is Ret finger protein-like 4A (RFPL4A) (Homo sapiens (Human)).